The sequence spans 288 residues: Diaminopimelate epimerase (288 aa).

Substrate-binding residues include Asn14 and Asn67. Cys76 (proton donor) is an active-site residue. Substrate-binding positions include 77-78 (GN), Asn166, Asn199, and 217-218 (ER). Cys226 (proton acceptor) is an active-site residue. Residue 227–228 (GT) coordinates substrate.

Belongs to the diaminopimelate epimerase family. In terms of assembly, homodimer.

Its subcellular location is the cytoplasm. It catalyses the reaction (2S,6S)-2,6-diaminopimelate = meso-2,6-diaminopimelate. Its pathway is amino-acid biosynthesis; L-lysine biosynthesis via DAP pathway; DL-2,6-diaminopimelate from LL-2,6-diaminopimelate: step 1/1. Its function is as follows. Catalyzes the stereoinversion of LL-2,6-diaminopimelate (L,L-DAP) to meso-diaminopimelate (meso-DAP), a precursor of L-lysine and an essential component of the bacterial peptidoglycan. This Bacillus mycoides (strain KBAB4) (Bacillus weihenstephanensis) protein is Diaminopimelate epimerase.